The sequence spans 329 residues: Quinone oxidoreductase (329 aa).

Position 2 is an N-acetylalanine (alanine 2). Lysine 23 bears the N6-acetyllysine mark. Residues tyrosine 53, 158–161 (SGGV), glycine 181, histidine 200, asparagine 229, 246–249 (VGSR), and 269–271 (VAL) each bind NADP(+). Serine 248 is subject to Phosphoserine.

It belongs to the zinc-containing alcohol dehydrogenase family. Quinone oxidoreductase subfamily. Homotetramer.

Its subcellular location is the cytoplasm. The catalysed reaction is 2 a quinone + NADPH + H(+) = 2 a 1,4-benzosemiquinone + NADP(+). Does not have alcohol dehydrogenase activity. Binds NADP and acts through a one-electron transfer process. Orthoquinones, such as 1,2-naphthoquinone or 9,10-phenanthrenequinone, are the best substrates (in vitro). May act in the detoxification of xenobiotics. Interacts with (AU)-rich elements (ARE) in the 3'-UTR of target mRNA species and enhances their stability. NADPH binding interferes with mRNA binding. This chain is Quinone oxidoreductase (CRYZ), found in Sus scrofa (Pig).